The chain runs to 700 residues: Polyribonucleotide nucleotidyltransferase (700 aa).

Residues Asp485 and Asp491 each coordinate Mg(2+). Residues 552–611 form the KH domain; it reads PRITTLKINPEKIRDVIGKGGATIRALTEETGTTIELEDDGTVKIASANGDATKEAIRRI. Positions 621 to 689 constitute an S1 motif domain; it reads GTVYNGKVVR…RQGRVRLSMK (69 aa).

Belongs to the polyribonucleotide nucleotidyltransferase family. As to quaternary structure, component of the RNA degradosome, which is a multiprotein complex involved in RNA processing and mRNA degradation. It depends on Mg(2+) as a cofactor.

It is found in the cytoplasm. The enzyme catalyses RNA(n+1) + phosphate = RNA(n) + a ribonucleoside 5'-diphosphate. Involved in mRNA degradation. Catalyzes the phosphorolysis of single-stranded polyribonucleotides processively in the 3'- to 5'-direction. The chain is Polyribonucleotide nucleotidyltransferase from Shewanella loihica (strain ATCC BAA-1088 / PV-4).